The following is a 369-amino-acid chain: MHGESPIKRRESRKIWVGSVPVGGDAPIAVQSMTNSDTNDVAATVAQINRLEAAGVDIVRVSVPDMDAAEAFGRIKQLVKVPLVADIHFDHRIALRVAELGVDCLRINPGNIGREDRVRAVVDAARDRGIPIRIGVNAGSLEKDLQKKYGEPTPEALVESALRHVEHLQRLNFQDFKVSVKASDVFMAVAAYRLLAKEIVQPLHLGITEAGGLRSGTVKSAVGLGMLLAEGIGDTIRISLAADPVEEVKVGYDILKSLRLRSRGINFIACPSCSRQNFDVVKTMNELEGRLEDLLVPLDVAVIGCVVNGPGEAKEAHIGLTGGTPNLIYIDGKPAQKLTNDNLVNELERLIREKAAEKAEADASVIVRG.

Positions 270, 273, 305, and 312 each coordinate [4Fe-4S] cluster.

Belongs to the IspG family. Requires [4Fe-4S] cluster as cofactor.

It carries out the reaction (2E)-4-hydroxy-3-methylbut-2-enyl diphosphate + oxidized [flavodoxin] + H2O + 2 H(+) = 2-C-methyl-D-erythritol 2,4-cyclic diphosphate + reduced [flavodoxin]. Its pathway is isoprenoid biosynthesis; isopentenyl diphosphate biosynthesis via DXP pathway; isopentenyl diphosphate from 1-deoxy-D-xylulose 5-phosphate: step 5/6. Its function is as follows. Converts 2C-methyl-D-erythritol 2,4-cyclodiphosphate (ME-2,4cPP) into 1-hydroxy-2-methyl-2-(E)-butenyl 4-diphosphate. The protein is 4-hydroxy-3-methylbut-2-en-1-yl diphosphate synthase (flavodoxin) of Pseudomonas syringae pv. syringae (strain B728a).